Consider the following 350-residue polypeptide: C5a anaphylatoxin chemotactic receptor 1 (350 aa).

Over 1–37 the chain is Extracellular; the sequence is MDSFNYTTPDYGHYDDKDTLDLNTPVDKTSNTLRVPD. Asn-5 is a glycosylation site (N-linked (GlcNAc...) asparagine). The interval 10-18 is required for CHIPS binding; it reads DYGHYDDKD. Tyr-11 and Tyr-14 each carry sulfotyrosine. Positions 21–30 are involved in C5a binding; that stretch reads DLNTPVDKTS. Residues 38–64 form a helical membrane-spanning segment; the sequence is ILALVIFAVVFLVGVLGNALVVWVTAF. Residues 65 to 69 lie on the Cytoplasmic side of the membrane; the sequence is EAKRT. Residues 70-93 form a helical membrane-spanning segment; that stretch reads INAIWFLNLAVADFLSCLALPILF. At 94-110 the chain is on the extracellular side; sequence TSIVQHHHWPFGGAACS. An intrachain disulfide couples Cys-109 to Cys-188. A helical transmembrane segment spans residues 111–132; that stretch reads ILPSLILLNMYASILLLATISA. Topologically, residues 133 to 153 are cytoplasmic; that stretch reads DRFLLVFKPIWCQNFRGAGLA. The helical transmembrane segment at 154–174 threads the bilayer; it reads WIACAVAWGLALLLTIPSFLY. Topologically, residues 175-200 are extracellular; that stretch reads RVVREEYFPPKVLCGVDYSHDKRRER. A helical transmembrane segment spans residues 201–226; the sequence is AVAIVRLVLGFLWPLLTLTICYTFIL. Residues 227-242 lie on the Cytoplasmic side of the membrane; the sequence is LRTWSRRATRSTKTLK. Residues 243–265 form a helical membrane-spanning segment; sequence VVVAVVASFFIFWLPYQVTGIMM. Over 266-282 the chain is Extracellular; that stretch reads SFLEPSSPTFLLLKKLD. A helical membrane pass occupies residues 283–303; that stretch reads SLCVSFAYINCCINPIIYVVA. Over 304–350 the chain is Cytoplasmic; it reads GQGFQGRLRKSLPSLLRNVLTEESVVRESKSFTRSTVDTMAQKTQAV. A phosphoserine mark is found at Ser-314, Ser-317, Ser-327, Ser-332, Ser-334, and Ser-338.

This sequence belongs to the G-protein coupled receptor 1 family. As to quaternary structure, homodimer. May also form higher-order oligomers. Interacts (when phosphorylated) with ARRB1 and ARRB2; the interaction is associated with internalization of C5aR. Interacts (via N-terminal domain) with S.aureus chemotaxis inhibitory protein (CHIPS); the interaction blocks the receptor and may thus inhibit the immune response. Sulfation plays a critical role in the association of C5aR with C5a, but no significant role in the ability of the receptor to transduce a signal and mobilize calcium in response to a small a small peptide agonist. Sulfation at Tyr-14 is important for CHIPS binding. Post-translationally, phosphorylated on serine residues in response to C5a binding, resulting in internalization of the receptor and short-term desensitization to the ligand. The key residues involved in this process are Ser-334 and Ser-338.

Its subcellular location is the cell membrane. The protein localises to the cytoplasmic vesicle. Receptor for the chemotactic and inflammatory peptide anaphylatoxin C5a. The ligand interacts with at least two sites on the receptor: a high-affinity site on the extracellular N-terminus, and a second site in the transmembrane region which activates downstream signaling events. Receptor activation stimulates chemotaxis, granule enzyme release, intracellular calcium release and superoxide anion production. The chain is C5a anaphylatoxin chemotactic receptor 1 (C5AR1) from Homo sapiens (Human).